The following is a 71-amino-acid chain: Brevinin-1V (71 aa).

The N-terminal stretch at 1 to 22 (MFTLKKSLLLLFFLGTINLSLC) is a signal peptide. Positions 23-45 (EQERDADEEERRDDSEERDIEVE) are excised as a propeptide. Cys-65 and Cys-71 are disulfide-bonded.

This sequence belongs to the frog skin active peptide (FSAP) family. Brevinin subfamily. In terms of tissue distribution, expressed by the skin glands.

It localises to the secreted. In terms of biological role, has antimicrobial activity against Gram-positive bacteria and fungi but has weak or no activity against a range of Gram-negative bacteria except P.faecalis. Active against the Gram-positive bacteria E.faecium 091299 (MIC=37.5 uM), S.aureus ATCC 25923 (MIC=2.4 uM), S.carnosus KHS (MIC=19 uM), B.licheniformis X39 (MIC=2.4 uM) and R.rhodochrous X15 (MIC=1.2 uM) and a lower activity against E.faecalis 981 (MIC=75 uM). Active against the Gram-negative bacterium P.faecalis X29 (MIC=9.5 uM) is virtually inactive against E.coli ATCC 25922 (MIC=150 uM), and inactive against P.aeruginosa and S.typhi. Has antifungal activity against C.albicans ATCC 2002 (MIC=9.5 uM) and is also active against the slime mold 090223 (MIC=1.2 uM). Has low hemolytic activity against human erythrocytes (LC(50)=75 uM). The chain is Brevinin-1V from Odorrana hainanensis (Odor frog).